The chain runs to 344 residues: Cycloartenol-C-24-methyltransferase 1 (344 aa).

This sequence belongs to the class I-like SAM-binding methyltransferase superfamily. Erg6/SMT family.

It catalyses the reaction zymosterol + S-adenosyl-L-methionine = fecosterol + S-adenosyl-L-homocysteine + H(+). Its pathway is steroid biosynthesis; sterol biosynthesis. Its function is as follows. Catalyzes the methyl transfer from S-adenosyl-methionine to the C-24 of cycloartenol to form 24-methylene cycloartenol. This chain is Cycloartenol-C-24-methyltransferase 1 (Smt1-1), found in Oryza sativa subsp. japonica (Rice).